We begin with the raw amino-acid sequence, 125 residues long: Large ribosomal subunit protein bL19 (125 aa).

This sequence belongs to the bacterial ribosomal protein bL19 family.

Functionally, this protein is located at the 30S-50S ribosomal subunit interface and may play a role in the structure and function of the aminoacyl-tRNA binding site. This is Large ribosomal subunit protein bL19 from Wolbachia pipientis subsp. Culex pipiens (strain wPip).